Reading from the N-terminus, the 312-residue chain is Zinc transporter ZitB (312 aa).

Helical transmembrane passes span 16 to 36 (LLIA…GGWL), 40 to 60 (LALL…FIAL), 81 to 101 (LTTL…ILIV), 117 to 137 (TPML…FWIL), 153 to 173 (LHVL…IVIL), and 177 to 197 (WTPI…RNAW).

The protein belongs to the cation diffusion facilitator (CDF) transporter (TC 2.A.4) family. SLC30A subfamily.

The protein resides in the cell inner membrane. Functionally, involved in zinc efflux across the cytoplasmic membrane, thus reducing zinc accumulation in the cytoplasm and rendering bacteria more resistant to zinc. It may contribute to zinc homeostasis at low concentrations of zinc. In Yersinia pseudotuberculosis serotype I (strain IP32953), this protein is Zinc transporter ZitB.